The chain runs to 627 residues: Plasmepsin IX (627 aa).

Residues 1–13 (MFFINFKKIKKKQ) lie on the Cytoplasmic side of the membrane. A helical; Signal-anchor for type II membrane protein transmembrane segment spans residues 14–34 (FPIYLTQHRIITVFLIFIYFI). Topologically, residues 35-627 (NLKDCFHINN…SSLHNKINNL (593 aa)) are lumenal. Positions 228–605 (YVGYIQIGTP…NNNSSYVGIA (378 aa)) constitute a Peptidase A1 domain. Active-site residues include D246 and D495.

It belongs to the peptidase A1 family. Autocleaved into a p55 mature form.

The protein resides in the membrane. Its subcellular location is the cytoplasmic vesicle. The protein localises to the secretory vesicle. It localises to the rhoptry. With respect to regulation, inhibited by small molecule 49c. Inhibited by small molecule WM382. During the asexual blood stage, initiates the proteolytic maturation of several rhoptry proteins and thus, is required for merozoite invasion of host erythrocytes and probably the subsequent development of the ring-stage. Cleaves rhoptry associated protein 1 RAP1 and apical sushi protein ASP during schizont maturation. Also cleaves rhoptry protein RON3. This is Plasmepsin IX from Plasmodium falciparum (isolate 3D7).